A 398-amino-acid polypeptide reads, in one-letter code: O-methyltransferase mpaG (398 aa).

Aspartate 264 serves as a coordination point for S-adenosyl-L-methionine. The active-site Proton acceptor is the histidine 306. Active-site residues include glutamate 335 and glutamate 362.

It belongs to the class I-like SAM-binding methyltransferase superfamily. Cation-independent O-methyltransferase family. COMT subfamily.

It is found in the cytoplasm. Its subcellular location is the cytosol. It carries out the reaction (4E,8E)-10-(4,6-dihydroxy-7-methyl-3-oxo-1,3-dihydro-2-benzofuran-5-yl)-4,8-dimethyldeca-4,8-dienoate + S-adenosyl-L-methionine = (4E,8E)-10-(4-hydroxy-6-methoxy-7-methyl-3-oxo-1,3-dihydro-2-benzofuran-5-yl)-4,8-dimethyldeca-4,8-dienoate + S-adenosyl-L-homocysteine + H(+). It participates in secondary metabolite biosynthesis; terpenoid biosynthesis. Functionally, O-methyltransferase; part of the gene cluster that mediates the biosynthesis of mycophenolic acid (MPA), the first isolated antibiotic natural product in the world obtained from a culture of Penicillium brevicompactum in 1893. MpaC methylates farnesyl-DHMP-3C (FDHMP-3C) to yield MFDHMP-3C. The first step of the pathway is the synthesis of 5-methylorsellinic acid (5MOA) by the cytosolic polyketide synthase mpaC. 5MOA is then converted to the phthalide compound 5,7-dihydroxy-4,6-dimethylphthalide (DHMP) by the endoplasmic reticulum-bound cytochrome P450 monooxygenase mpaDE. MpaDE first catalyzes hydroxylation of 5-MOA to 4,6-dihydroxy-2-(hydroxymethyl)-3-methylbenzoic acid (DHMB). MpaDE then acts as a lactone synthase that catalyzes the ring closure to convert DHMB into DHMP. The next step is the prenylation of DHMP by the Golgi apparatus-associated prenyltransferase mpaA to yield farnesyl-DHMP (FDHMP). The ER-bound oxygenase mpaB then mediates the oxidative cleavage the C19-C20 double bond in FDHMP to yield FDHMP-3C via a mycophenolic aldehyde intermediate. The O-methyltransferase mpaG catalyzes the methylation of FDHMP-3C to yield MFDHMP-3C. After the cytosolic methylation of FDHMP-3C, MFDHMP-3C enters into peroxisomes probably via free diffusion due to its low molecular weight. Upon a peroxisomal CoA ligation reaction, catalyzed by a beta-oxidation component enzyme acyl-CoA ligase ACL891, MFDHMP-3C-CoA would then be restricted to peroxisomes for the following beta-oxidation pathway steps. The peroxisomal beta-oxidation machinery than converts MFDHMP-3C-CoA into MPA_CoA, via a beta-oxidation chain-shortening process. Finally mpaH acts as a peroxisomal acyl-CoA hydrolase with high substrate specificity toward MPA-CoA to release the final product MPA. The polypeptide is O-methyltransferase mpaG (Penicillium roqueforti (strain FM164)).